We begin with the raw amino-acid sequence, 131 residues long: Flagellar assembly factor FliW (131 aa).

This sequence belongs to the FliW family. In terms of assembly, interacts with translational regulator CsrA and flagellin(s).

The protein resides in the cytoplasm. Acts as an anti-CsrA protein, binds CsrA and prevents it from repressing translation of its target genes, one of which is flagellin. Binds to flagellin and participates in the assembly of the flagellum. This Campylobacter lari (strain RM2100 / D67 / ATCC BAA-1060) protein is Flagellar assembly factor FliW.